The sequence spans 405 residues: Probable tRNA sulfurtransferase (405 aa).

Positions 60–165 (DAVINRLKKV…SNGIFLTSEV (106 aa)) constitute a THUMP domain. ATP contacts are provided by residues 183–184 (ML), 208–209 (HF), arginine 265, glycine 287, and glutamine 296.

The protein belongs to the ThiI family.

It localises to the cytoplasm. It catalyses the reaction [ThiI sulfur-carrier protein]-S-sulfanyl-L-cysteine + a uridine in tRNA + 2 reduced [2Fe-2S]-[ferredoxin] + ATP + H(+) = [ThiI sulfur-carrier protein]-L-cysteine + a 4-thiouridine in tRNA + 2 oxidized [2Fe-2S]-[ferredoxin] + AMP + diphosphate. The catalysed reaction is [ThiS sulfur-carrier protein]-C-terminal Gly-Gly-AMP + S-sulfanyl-L-cysteinyl-[cysteine desulfurase] + AH2 = [ThiS sulfur-carrier protein]-C-terminal-Gly-aminoethanethioate + L-cysteinyl-[cysteine desulfurase] + A + AMP + 2 H(+). It functions in the pathway cofactor biosynthesis; thiamine diphosphate biosynthesis. Its function is as follows. Catalyzes the ATP-dependent transfer of a sulfur to tRNA to produce 4-thiouridine in position 8 of tRNAs, which functions as a near-UV photosensor. Also catalyzes the transfer of sulfur to the sulfur carrier protein ThiS, forming ThiS-thiocarboxylate. This is a step in the synthesis of thiazole, in the thiamine biosynthesis pathway. The sulfur is donated as persulfide by IscS. The sequence is that of Probable tRNA sulfurtransferase from Pediococcus pentosaceus (strain ATCC 25745 / CCUG 21536 / LMG 10740 / 183-1w).